Consider the following 398-residue polypeptide: 1-deoxy-D-xylulose 5-phosphate reductoisomerase (398 aa).

Positions 10, 11, 12, 13, 36, 37, 38, and 124 each coordinate NADPH. Residue K125 coordinates 1-deoxy-D-xylulose 5-phosphate. E126 serves as a coordination point for NADPH. D150 serves as a coordination point for Mn(2+). 1-deoxy-D-xylulose 5-phosphate contacts are provided by S151, E152, S186, and H209. E152 contacts Mn(2+). G215 is a binding site for NADPH. 1-deoxy-D-xylulose 5-phosphate-binding residues include S222, N227, K228, and E231. Residue E231 participates in Mn(2+) binding.

The protein belongs to the DXR family. In terms of assembly, homodimer. The cofactor is Mg(2+). Mn(2+) is required as a cofactor.

It catalyses the reaction 2-C-methyl-D-erythritol 4-phosphate + NADP(+) = 1-deoxy-D-xylulose 5-phosphate + NADPH + H(+). Its pathway is isoprenoid biosynthesis; isopentenyl diphosphate biosynthesis via DXP pathway; isopentenyl diphosphate from 1-deoxy-D-xylulose 5-phosphate: step 1/6. Catalyzes the NADPH-dependent rearrangement and reduction of 1-deoxy-D-xylulose-5-phosphate (DXP) to 2-C-methyl-D-erythritol 4-phosphate (MEP). This is 1-deoxy-D-xylulose 5-phosphate reductoisomerase from Shigella flexneri.